Consider the following 644-residue polypeptide: uncharacterized protein (644 aa).

Residues 16-38 (LLSYLGVVGVGIAGLCIYRSVWG) form a helical membrane-spanning segment. Residues 586-603 (VRQLQKEAGEGEAEEHPR) show a composition bias toward basic and acidic residues. A disordered region spans residues 586–613 (VRQLQKEAGEGEAEEHPRARPAAGKAQR).

It is found in the membrane. This is an uncharacterized protein from Treponema pallidum (strain Nichols).